The sequence spans 398 residues: Enoyl-[acyl-carrier-protein] reductase [NADH] (398 aa).

Residues 48–53 (GASTGY), 74–75 (FE), 111–112 (DA), and 139–140 (LA) each bind NAD(+). Tyrosine 225 serves as a coordination point for substrate. Tyrosine 235 serves as the catalytic Proton donor. NAD(+) is bound by residues lysine 244 and 273-275 (VVT).

It belongs to the TER reductase family. Monomer.

It carries out the reaction a 2,3-saturated acyl-[ACP] + NAD(+) = a (2E)-enoyl-[ACP] + NADH + H(+). It functions in the pathway lipid metabolism; fatty acid biosynthesis. Functionally, involved in the final reduction of the elongation cycle of fatty acid synthesis (FAS II). Catalyzes the reduction of a carbon-carbon double bond in an enoyl moiety that is covalently linked to an acyl carrier protein (ACP). This Pseudomonas fluorescens (strain ATCC BAA-477 / NRRL B-23932 / Pf-5) protein is Enoyl-[acyl-carrier-protein] reductase [NADH].